The primary structure comprises 421 residues: Mitochondrial tRNA-specific 2-thiouridylase 1 (421 aa).

ATP is bound by residues 10 to 17 (ALSGGVDS) and Met-36. Residues 96–98 (NPD) form an interaction with target base in tRNA region. The Nucleophile role is filled by Cys-101. Cys-101 and Cys-222 are disulfide-bonded. An ATP-binding site is contributed by Gly-126. The tract at residues 171-173 (KDQ) is interaction with tRNA. The Cysteine persulfide intermediate role is filled by Cys-222. The interval 334 to 335 (RH) is interaction with tRNA. The disordered stretch occupies residues 395–421 (KGQRRAGMATESPSDSPEDGPGLSPLL).

The protein belongs to the MnmA/TRMU family. As to expression, ubiquitous. Abundantly expressed in tissues with high metabolic rates including heart, liver, kidney, and brain.

Its subcellular location is the mitochondrion. It catalyses the reaction 5-taurinomethyluridine(34) in tRNA + S-sulfanyl-L-cysteinyl-[protein] + AH2 + ATP = 5-taurinomethyl-2-thiouridine(34) in tRNA + L-cysteinyl-[protein] + A + AMP + diphosphate + H(+). Catalyzes the 2-thiolation of uridine at the wobble position (U34) of mitochondrial tRNA(Lys), tRNA(Glu) and tRNA(Gln). Required for the formation of 5-taurinomethyl-2-thiouridine (tm5s2U) of mitochondrial tRNA(Lys), tRNA(Glu), and tRNA(Gln) at the wobble position. ATP is required to activate the C2 atom of the wobble base. The polypeptide is Mitochondrial tRNA-specific 2-thiouridylase 1 (TRMU) (Homo sapiens (Human)).